The chain runs to 67 residues: DNA gyrase inhibitor YacG (67 aa).

Positions 10, 13, 29, and 33 each coordinate Zn(2+).

Belongs to the DNA gyrase inhibitor YacG family. Interacts with GyrB. It depends on Zn(2+) as a cofactor.

In terms of biological role, inhibits all the catalytic activities of DNA gyrase by preventing its interaction with DNA. Acts by binding directly to the C-terminal domain of GyrB, which probably disrupts DNA binding by the gyrase. This Pasteurella multocida (strain Pm70) protein is DNA gyrase inhibitor YacG.